Reading from the N-terminus, the 711-residue chain is Cyclomaltodextrin glucanotransferase (711 aa).

Residues 1–31 (MRRWLSLVLSMSFVFSAIFIVSDTQKVTVEA) form the signal peptide. Residues 32–165 (AGNLNKVNFT…GIKVIIDFAP (134 aa)) form an A1 region. D55, N57, N60, and N61 together coordinate Ca(2+). C71 and C78 are joined by a disulfide. G79 and D81 together coordinate Ca(2+). 127 to 128 (YW) lines the substrate pocket. A Ca(2+)-binding site is contributed by N166. Residues 166–229 (NHTSPASETN…NLFDLADLNH (64 aa)) form a b region. A substrate-binding site is contributed by H167. I217 lines the Ca(2+) pocket. 220-223 (NLFD) contributes to the substrate binding site. D226 is a Ca(2+) binding site. Residues 230-433 (QNPVIDRYLK…LRRNNPALAY (204 aa)) are A2. Position 254 (R254) interacts with substrate. Residue D256 is the Nucleophile of the active site. 259 to 260 (KH) serves as a coordination point for substrate. Residue H260 coordinates Ca(2+). The Proton donor role is filled by E284. H354, D398, and R402 together coordinate substrate. The c stretch occupies residues 434–522 (GDTEQRWING…EVGVWAYSAT (89 aa)). The interval 523–606 (ESTPIIGHVG…SAAYDNFEVL (84 aa)) is d. The IPT/TIG domain occupies 526–604 (PIIGHVGPMM…QTSAAYDNFE (79 aa)). In terms of domain architecture, CBM20 spans 605–711 (VLTNDQVSVR…TGKIIVDWQN (107 aa)). Residues 607–711 (TNDQVSVRFV…TGKIIVDWQN (105 aa)) are e.

It belongs to the glycosyl hydrolase 13 family. As to quaternary structure, monomer. Ca(2+) serves as cofactor.

It is found in the secreted. The catalysed reaction is Cyclizes part of a (1-&gt;4)-alpha-D-glucan chain by formation of a (1-&gt;4)-alpha-D-glucosidic bond.. This is Cyclomaltodextrin glucanotransferase (cgt) from Geobacillus stearothermophilus (Bacillus stearothermophilus).